A 417-amino-acid polypeptide reads, in one-letter code: Tyrosine--tRNA ligase (417 aa).

Position 34 (Y34) interacts with L-tyrosine. A 'HIGH' region motif is present at residues 39-48 (PSGDSLHIGH). Positions 165 and 169 each coordinate L-tyrosine. The short motif at 227–231 (KFGKT) is the 'KMSKS' region element. K230 contributes to the ATP binding site. The 67-residue stretch at 349–415 (ANIVDWLVDT…GKKNYTLAKV (67 aa)) folds into the S4 RNA-binding domain.

It belongs to the class-I aminoacyl-tRNA synthetase family. TyrS type 1 subfamily. Homodimer.

The protein localises to the cytoplasm. It carries out the reaction tRNA(Tyr) + L-tyrosine + ATP = L-tyrosyl-tRNA(Tyr) + AMP + diphosphate + H(+). Its function is as follows. Catalyzes the attachment of tyrosine to tRNA(Tyr) in a two-step reaction: tyrosine is first activated by ATP to form Tyr-AMP and then transferred to the acceptor end of tRNA(Tyr). The protein is Tyrosine--tRNA ligase of Limosilactobacillus fermentum (strain NBRC 3956 / LMG 18251) (Lactobacillus fermentum).